The primary structure comprises 23 residues: Coenzyme PQQ synthesis protein A (23 aa).

The segment at residues 15–19 (EVTLY) is a cross-link (pyrroloquinoline quinone (Glu-Tyr)).

It belongs to the PqqA family.

It functions in the pathway cofactor biosynthesis; pyrroloquinoline quinone biosynthesis. Required for coenzyme pyrroloquinoline quinone (PQQ) biosynthesis. PQQ is probably formed by cross-linking a specific glutamate to a specific tyrosine residue and excising these residues from the peptide. This chain is Coenzyme PQQ synthesis protein A, found in Klebsiella pneumoniae (strain 342).